Here is a 316-residue protein sequence, read N- to C-terminus: Aspartate carbamoyltransferase catalytic subunit (316 aa).

Residues Arg-56 and Thr-57 each coordinate carbamoyl phosphate. Lys-84 contacts L-aspartate. Positions 106, 139, and 142 each coordinate carbamoyl phosphate. 2 residues coordinate L-aspartate: Arg-172 and Arg-226. Carbamoyl phosphate contacts are provided by Gly-267 and Pro-268.

Belongs to the aspartate/ornithine carbamoyltransferase superfamily. ATCase family. In terms of assembly, heterododecamer (2C3:3R2) of six catalytic PyrB chains organized as two trimers (C3), and six regulatory PyrI chains organized as three dimers (R2).

The catalysed reaction is carbamoyl phosphate + L-aspartate = N-carbamoyl-L-aspartate + phosphate + H(+). Its pathway is pyrimidine metabolism; UMP biosynthesis via de novo pathway; (S)-dihydroorotate from bicarbonate: step 2/3. Its function is as follows. Catalyzes the condensation of carbamoyl phosphate and aspartate to form carbamoyl aspartate and inorganic phosphate, the committed step in the de novo pyrimidine nucleotide biosynthesis pathway. The sequence is that of Aspartate carbamoyltransferase catalytic subunit from Mycobacterium sp. (strain JLS).